Here is a 452-residue protein sequence, read N- to C-terminus: Trigger factor (452 aa).

The PPIase FKBP-type domain occupies 171-256 (GDRVTISFKG…ATKVEAPQDT (86 aa)).

The protein belongs to the FKBP-type PPIase family. Tig subfamily.

Its subcellular location is the cytoplasm. It catalyses the reaction [protein]-peptidylproline (omega=180) = [protein]-peptidylproline (omega=0). Involved in protein export. Acts as a chaperone by maintaining the newly synthesized protein in an open conformation. Functions as a peptidyl-prolyl cis-trans isomerase. This chain is Trigger factor, found in Rhodopseudomonas palustris (strain HaA2).